A 424-amino-acid polypeptide reads, in one-letter code: Tyrosine--tRNA ligase (424 aa).

An L-tyrosine-binding site is contributed by tyrosine 37. Residues 42-51 (PTADSLHLGH) carry the 'HIGH' region motif. At lysine 144 the chain carries N6-acetyllysine. Tyrosine 175 and glutamine 179 together coordinate L-tyrosine. The 'KMSKS' region signature appears at 235 to 239 (KFGKT). Residue lysine 238 coordinates ATP. The S4 RNA-binding domain maps to 357 to 414 (ADLMQALVDSELQPSRGQARKTIASNAITINGEKQSDPEYFFKEEDRLFGRFTLLRRG).

The protein belongs to the class-I aminoacyl-tRNA synthetase family. TyrS type 1 subfamily. In terms of assembly, homodimer.

It localises to the cytoplasm. It carries out the reaction tRNA(Tyr) + L-tyrosine + ATP = L-tyrosyl-tRNA(Tyr) + AMP + diphosphate + H(+). Catalyzes the attachment of tyrosine to tRNA(Tyr) in a two-step reaction: tyrosine is first activated by ATP to form Tyr-AMP and then transferred to the acceptor end of tRNA(Tyr). In Escherichia coli O127:H6 (strain E2348/69 / EPEC), this protein is Tyrosine--tRNA ligase.